A 102-amino-acid polypeptide reads, in one-letter code: MTENIDTANIDAIKNKTLKRTANRANKEVFFRRRKGCPLSAPDGTAPIITYKDPDLLSKFISECGRVLPARVTNVCRSKQRELTKAIKIARELALLPFVYHQ.

Belongs to the bacterial ribosomal protein bS18 family. Part of the 30S ribosomal subunit. Forms a tight heterodimer with protein bS6.

Its function is as follows. Binds as a heterodimer with protein bS6 to the central domain of the 16S rRNA, where it helps stabilize the platform of the 30S subunit. This is Small ribosomal subunit protein bS18 from Orientia tsutsugamushi (strain Boryong) (Rickettsia tsutsugamushi).